Here is a 237-residue protein sequence, read N- to C-terminus: MTETKEEKVHKVFEKISPSYDRMNSVISFKLHVKWRKETMKLMRVQKGTNVLDVCCGTADWSIMMAEEIGPEGHVTGLDFSENMLKVGREKVKEADLHNVELIHGNAMELPFPDNSFDYVTIGFGLRNVPDYMQVLREMYRVLKPGGQLACIDTSQPNIPGWKQVFNAYFRYVMPVFGKFFAKSYKEYSWLQESTREFPGMARLAEMFQEAGFSYVRYISHSGGASATHFGFKKKEQ.

S-adenosyl-L-methionine contacts are provided by residues Thr-58, Asp-79, and 106–107 (NA).

It belongs to the class I-like SAM-binding methyltransferase superfamily. MenG/UbiE family.

The enzyme catalyses a 2-demethylmenaquinol + S-adenosyl-L-methionine = a menaquinol + S-adenosyl-L-homocysteine + H(+). The protein operates within quinol/quinone metabolism; menaquinone biosynthesis; menaquinol from 1,4-dihydroxy-2-naphthoate: step 2/2. Functionally, methyltransferase required for the conversion of demethylmenaquinol (DMKH2) to menaquinol (MKH2). This Listeria innocua serovar 6a (strain ATCC BAA-680 / CLIP 11262) protein is Demethylmenaquinone methyltransferase.